The primary structure comprises 392 residues: Enoyl-[acyl-carrier-protein] reductase [NADH] (392 aa).

Residues 46–51 (GSSSGY), 72–73 (LE), 108–109 (DA), and 136–137 (VA) each bind NAD(+). Tyrosine 225 is a substrate binding site. Tyrosine 235 (proton donor) is an active-site residue. NAD(+)-binding positions include lysine 244 and 273-275 (LVT).

This sequence belongs to the TER reductase family. Monomer.

The catalysed reaction is a 2,3-saturated acyl-[ACP] + NAD(+) = a (2E)-enoyl-[ACP] + NADH + H(+). The protein operates within lipid metabolism; fatty acid biosynthesis. Involved in the final reduction of the elongation cycle of fatty acid synthesis (FAS II). Catalyzes the reduction of a carbon-carbon double bond in an enoyl moiety that is covalently linked to an acyl carrier protein (ACP). This chain is Enoyl-[acyl-carrier-protein] reductase [NADH], found in Streptomyces avermitilis (strain ATCC 31267 / DSM 46492 / JCM 5070 / NBRC 14893 / NCIMB 12804 / NRRL 8165 / MA-4680).